Consider the following 127-residue polypeptide: Fluoride-specific ion channel FluC (127 aa).

3 helical membrane passes run 37 to 57 (TSFV…WLAL), 68 to 88 (LFLA…SLEV), and 102 to 122 (LYAG…LWMA). Positions 76 and 79 each coordinate Na(+).

The protein belongs to the fluoride channel Fluc/FEX (TC 1.A.43) family.

The protein localises to the cell inner membrane. It carries out the reaction fluoride(in) = fluoride(out). Na(+) is not transported, but it plays an essential structural role and its presence is essential for fluoride channel function. Fluoride-specific ion channel. Important for reducing fluoride concentration in the cell, thus reducing its toxicity. The polypeptide is Fluoride-specific ion channel FluC (Hyphomonas neptunium (strain ATCC 15444)).